A 2568-amino-acid polypeptide reads, in one-letter code: Highly reducing polyketide synthase AN6791 (2568 aa).

Residues 11–445 (AEPIAIVGLS…GTNAHLIVES (435 aa)) form the Ketosynthase family 3 (KS3) domain. Active-site for beta-ketoacyl synthase activity residues include C200, H326, and H366. One can recognise a Malonyl-CoA:ACP transacylase (MAT) domain in the interval 558-882 (VFTGQGAQWY…GSLVREVSAV (325 aa)). Residues 949–1087 (HDLLGSLVLG…GLITMEPEDA (139 aa)) are N-terminal hotdog fold. Residues 949–1258 (HDLLGSLVLG…FQSVGRSAAP (310 aa)) enclose the PKS/mFAS DH domain. H981 acts as the Proton acceptor; for dehydratase activity in catalysis. The segment at 1104–1258 (TRRFGPSDLY…FQSVGRSAAP (155 aa)) is C-terminal hotdog fold. D1169 serves as the catalytic Proton donor; for dehydratase activity. The interval 1311–1620 (RACLYFIYDA…EVRDCESDEW (310 aa)) is methyltransferase (CMet) domain. The Enoyl reductase (ER) domain occupies 1857–2174 (GLLDTIAFDD…VGKHSGKVVL (318 aa)). The region spanning 2197 to 2375 (ASYLLVGGAG…AVSMDLGPVK (179 aa)) is the Ketoreductase (KR) domain. One can recognise a Carrier domain in the interval 2481–2558 (QAEKLVVEAI…ALASEVTRKS (78 aa)). O-(pantetheine 4'-phosphoryl)serine is present on S2518.

The cofactor is pantetheine 4'-phosphate.

The protein operates within secondary metabolite biosynthesis. Its function is as follows. Highly reducing polyketide synthase; part of a cluster that mediates the biosynthesis of a yet undetermined secondary metabolite. With esterase AN6793, produces a pathway intermediate compound with molecular weight 258. The polypeptide is Highly reducing polyketide synthase AN6791 (Emericella nidulans (strain FGSC A4 / ATCC 38163 / CBS 112.46 / NRRL 194 / M139) (Aspergillus nidulans)).